A 141-amino-acid chain; its full sequence is MSNITIYHNPACGTSRNTLEMIRNSGTEPTIILYLENPPSRDELVKLIADMGISVRALLRKNVEPYEQLGLAEDKFTDDQLIDFMLQHPILINRPIVVTPLGTRLCRPSEVVLDILQDAQKGAFTKEDGEKVVDEAGKRLK.

Cysteine 12 serves as the catalytic Nucleophile; cysteine thioarsenate intermediate.

This sequence belongs to the ArsC family. Monomer in solution.

The catalysed reaction is [glutaredoxin]-dithiol + arsenate + glutathione + H(+) = glutathionyl-S-S-[glutaredoxin] + arsenite + H2O. Its activity is regulated as follows. Inhibited by the thiol reagents iodoacetate (IAA) and N-ethylmaleimide (NEM). Activity is rapidly inactivated by the histidine-modifying reagent diethylpyrocarbonate (DEPC). In terms of biological role, involved in resistance to arsenate. Catalyzes the reduction of arsenate [As(V)] to arsenite [As(III)]. The resulting arsenite is then extruded from the cell via the ArsAB transport system. The polypeptide is Arsenate reductase (Escherichia coli).